The chain runs to 213 residues: UPF0111 protein TM_0914 (213 aa).

It belongs to the UPF0111 family.

This Thermotoga maritima (strain ATCC 43589 / DSM 3109 / JCM 10099 / NBRC 100826 / MSB8) protein is UPF0111 protein TM_0914.